The following is a 228-amino-acid chain: Sugar fermentation stimulation protein homolog (228 aa).

It belongs to the SfsA family.

The protein is Sugar fermentation stimulation protein homolog of Desulfitobacterium hafniense (strain Y51).